The primary structure comprises 565 residues: Frizzled-2 (565 aa).

A signal peptide spans 1–23; the sequence is MRPRSALPRLLLPLLLLPAAGPA. Over 24-247 the chain is Extracellular; sequence QFHGEKGISI…QEETRFARLW (224 aa). The FZ domain maps to 34 to 153; it reads PDHGFCQPIS…HGAEQICVGQ (120 aa). Cystine bridges form between Cys-39-Cys-100, Cys-47-Cys-93, Cys-84-Cys-121, Cys-110-Cys-150, and Cys-114-Cys-138. N-linked (GlcNAc...) asparagine glycosylation occurs at Asn-53. A glycan (N-linked (GlcNAc...) asparagine) is linked at Asn-154. The segment at 160–189 is disordered; it reads APALLTTAPPPGLQPGAGGTPGGPGGGGAP. Residues 174–188 are compositionally biased toward gly residues; the sequence is PGAGGTPGGPGGGGA. Residues 248–268 traverse the membrane as a helical segment; sequence ILTWSVLCCASTFFTVTTYLV. At 269–279 the chain is on the cytoplasmic side; that stretch reads DMQRFRYPERP. A helical membrane pass occupies residues 280 to 300; the sequence is IIFLSGCYTMVSVAYIAGFVL. The Extracellular portion of the chain corresponds to 301–327; the sequence is QERVVCNERFSEDGYRTVVQGTKKEGC. The helical transmembrane segment at 328-348 threads the bilayer; it reads TILFMMLYFFSMASSIWWVIL. Residues 349–370 lie on the Cytoplasmic side of the membrane; it reads SLTWFLAAGMKWGHEAIEANSQ. A helical membrane pass occupies residues 371–391; the sequence is YFHLAAWAVPAVKTITILAMG. The Extracellular portion of the chain corresponds to 392–414; the sequence is QIDGDLLSGVCFVGLNSLDPLRG. The chain crosses the membrane as a helical span at residues 415–435; sequence FVLAPLFVYLFIGTSFLLAGF. Residues 436-461 are Cytoplasmic-facing; that stretch reads VSLFRIRTIMKHDGTKTEKLERLMVR. A helical transmembrane segment spans residues 462 to 482; sequence IGVFSVLYTVPATIVIACYFY. At 483 to 519 the chain is on the extracellular side; the sequence is EQAFREHWERSWVSQHCKSLAIPCPAHYTPRMSPDFT. Residues 520–540 form a helical membrane-spanning segment; the sequence is VYMIKYLMTLIVGITSGFWIW. Residues 541 to 565 lie on the Cytoplasmic side of the membrane; that stretch reads SGKTLHSWRKFYTRLTNSRHGETTV. A Lys-Thr-X-X-X-Trp motif, mediates interaction with the PDZ domain of Dvl family members motif is present at residues 543 to 548; sequence KTLHSW. Positions 563–565 match the PDZ-binding motif; sequence TTV.

This sequence belongs to the G-protein coupled receptor Fz/Smo family. In terms of assembly, (Microbial infection) Interacts with C.difficile toxin TcdB; frizzled receptors constitute the major host receptors for TcdB in the colonic epithelium. Ubiquitinated by ZNRF3, leading to its degradation by the proteasome. As to expression, widely expressed. In the adult, mainly found in heart, placenta, skeletal muscle, lung, kidney, pancreas, prostate, testis, ovary and colon. In the fetus, expressed in brain, lung and kidney. Low levels in fetal liver.

The protein resides in the membrane. The protein localises to the cell membrane. Receptor for Wnt proteins. Most of frizzled receptors are coupled to the beta-catenin canonical signaling pathway, which leads to the activation of disheveled proteins, inhibition of GSK-3 kinase, nuclear accumulation of beta-catenin and activation of Wnt target genes. A second signaling pathway involving PKC and calcium fluxes has been seen for some family members, but it is not yet clear if it represents a distinct pathway or if it can be integrated in the canonical pathway, as PKC seems to be required for Wnt-mediated inactivation of GSK-3 kinase. Both pathways seem to involve interactions with G-proteins. May be involved in transduction and intercellular transmission of polarity information during tissue morphogenesis and/or in differentiated tissues. In terms of biological role, (Microbial infection) Acts as a receptor for C.difficile toxin TcdB in the colonic epithelium. TcdB occupies the binding site for Wnt-adducted palmitoleate in frizzled receptors and TcdB-binding prevents Wnt-binding and downstream Wnt signaling. This is Frizzled-2 (FZD2) from Homo sapiens (Human).